Here is a 456-residue protein sequence, read N- to C-terminus: tRNA modification GTPase MnmE (456 aa).

Residues R24, E81, and K120 each contribute to the (6S)-5-formyl-5,6,7,8-tetrahydrofolate site. The TrmE-type G domain occupies 216-379 (GMTVVIAGRP…LRDHLKACMG (164 aa)). K(+) is bound at residue N226. GTP is bound by residues 226 to 231 (NAGKSS), 245 to 251 (TEIAGTT), 270 to 273 (DTAG), and 335 to 338 (NKAD). Residue S230 participates in Mg(2+) binding. Residues T245, I247, and T250 each contribute to the K(+) site. T251 is a binding site for Mg(2+). K456 serves as a coordination point for (6S)-5-formyl-5,6,7,8-tetrahydrofolate.

It belongs to the TRAFAC class TrmE-Era-EngA-EngB-Septin-like GTPase superfamily. TrmE GTPase family. In terms of assembly, homodimer. Heterotetramer of two MnmE and two MnmG subunits. K(+) is required as a cofactor.

The protein resides in the cytoplasm. Functionally, exhibits a very high intrinsic GTPase hydrolysis rate. Involved in the addition of a carboxymethylaminomethyl (cmnm) group at the wobble position (U34) of certain tRNAs, forming tRNA-cmnm(5)s(2)U34. The polypeptide is tRNA modification GTPase MnmE (Pseudomonas fluorescens (strain Pf0-1)).